The following is a 387-amino-acid chain: O-methyltransferase asqD (387 aa).

S-adenosyl-L-methionine is bound at residue Asp-252. Catalysis depends on His-294, which acts as the Proton acceptor.

The protein belongs to the class I-like SAM-binding methyltransferase superfamily. Cation-independent O-methyltransferase family.

It participates in secondary metabolite biosynthesis. It functions in the pathway alkaloid biosynthesis. The protein operates within mycotoxin biosynthesis. Functionally, O-methyltransferase; part of the gene cluster that mediates the biosynthesis of the aspoquinolone mycotoxins. The role of asqD within the aspoquinolone pathway has still to be determined. The first step of the pathway is catalyzed by the nonribosomal peptide synthetase asqK that condenses anthranilic acid and O-methyl-L-tyrosine to produce 4'-methoxycyclopeptin. 4'-methoxycyclopeptin is then converted to 4'-methoxydehydrocyclopeptin by the ketoglutarate-dependent dioxygenase asqJ. AsqJ also converts its first product 4'-methoxydehydrocyclopeptin to 4'-methoxycyclopenin. The following conversion of 4'-methoxycyclopenin into 4'-methoxyviridicatin is catalyzed by the cyclopenase asqI. 4'-methoxyviridicatin is the precursor of quinolone natural products, and is further converted to quinolinone B. The prenyltransferase asqH1 then catalyzes the canonical Friedel-Crafts alkylation of quinolinone B with dimethylallyl cation to yield dimethylallyl quinolone, which is subjected to FAD-dependent dehydrogenation by the FAD-linked oxidoreductase asqF to yield conjugated aryl diene. The delta(3') double bond then serves as the site of the second alkylation with DMAPP catalyzed by the prenyltransferase asqH2 to yield a carbenium ion intermediate, which can be attacked by H(2)O to yield a styrenyl quinolone containing a C3'-hydroxyprenyl chain. The FAD-dependent monooxygenase asqG performs epoxidation of the terminal C7'-C8' olefin. Finally, after dehydratation of the epoxide at C3 by asqC, the quinolone epoxide rearrangement protein asqO catalyzes an enzymatic 3-exo-tet cyclization to yield the cyclopropyl-THF ring system in aspoquinolone. In Emericella nidulans (strain FGSC A4 / ATCC 38163 / CBS 112.46 / NRRL 194 / M139) (Aspergillus nidulans), this protein is O-methyltransferase asqD.